The following is a 301-amino-acid chain: N-acetylmuramic acid 6-phosphate etherase (301 aa).

The region spanning Ile-57–Lys-220 is the SIS domain. Catalysis depends on Glu-85, which acts as the Proton donor. Residue Glu-116 is part of the active site.

Belongs to the GCKR-like family. MurNAc-6-P etherase subfamily. As to quaternary structure, homodimer.

It carries out the reaction N-acetyl-D-muramate 6-phosphate + H2O = N-acetyl-D-glucosamine 6-phosphate + (R)-lactate. The protein operates within amino-sugar metabolism; 1,6-anhydro-N-acetylmuramate degradation. It participates in amino-sugar metabolism; N-acetylmuramate degradation. Its pathway is cell wall biogenesis; peptidoglycan recycling. Its function is as follows. Specifically catalyzes the cleavage of the D-lactyl ether substituent of MurNAc 6-phosphate, producing GlcNAc 6-phosphate and D-lactate. Together with AnmK, is also required for the utilization of anhydro-N-acetylmuramic acid (anhMurNAc) either imported from the medium or derived from its own cell wall murein, and thus plays a role in cell wall recycling. The chain is N-acetylmuramic acid 6-phosphate etherase from Pasteurella multocida (strain Pm70).